The primary structure comprises 182 residues: MKLIDRRMRLTELLLRCSISVFALLALILVVTDTEVKLIFTIKKTAKYTDMKAVVFLVVANGIAAVYSLLQSVRCVVGTMKGRVLFSKPLAWAFFSGDQAMAYLNVAAIAATAESGVIAREGEEDLQWMRVCNMYGKFCNQMAIGVSSALLASIAMVFVSCISAFSLFRLYGATRDRRTTPW.

The Cytoplasmic segment spans residues 1-12 (MKLIDRRMRLTE). A helical membrane pass occupies residues 13–31 (LLLRCSISVFALLALILVV). Over 32–52 (TDTEVKLIFTIKKTAKYTDMK) the chain is Extracellular. Residues 53–73 (AVVFLVVANGIAAVYSLLQSV) form a helical membrane-spanning segment. Over 74–89 (RCVVGTMKGRVLFSKP) the chain is Cytoplasmic. Residues 90–110 (LAWAFFSGDQAMAYLNVAAIA) traverse the membrane as a helical segment. The Extracellular segment spans residues 111–141 (ATAESGVIAREGEEDLQWMRVCNMYGKFCNQ). A helical transmembrane segment spans residues 142–162 (MAIGVSSALLASIAMVFVSCI). Over 163–182 (SAFSLFRLYGATRDRRTTPW) the chain is Cytoplasmic.

This sequence belongs to the Casparian strip membrane proteins (CASP) family. Homodimer and heterodimers.

The protein resides in the cell membrane. The protein is CASP-like protein 2B1 of Arabidopsis lyrata subsp. lyrata (Lyre-leaved rock-cress).